The primary structure comprises 665 residues: MAFPVDLLDNCTHEELENSSEDYLSSLRCGDPEHPECFSSLNITIPVSLSNVGFVPLYGGNQTQKILALFAPEDSLTAVALYLVGQWWAIDDIVKTSEPSREGLKQVSTLGERVVLYVLNRIIYRKQEMERNEIPFLCHSSTDYAKILWKKGEAVGFYSVKPTGSLCASFLTQNYQLPVLDTMFIRKKYRGKDLGLHMLEDFVDSFTEDALGLRYPLSSLMYTASKQYFEKYPGDHELLWEVEGVGHWHQRVPVTRALQREAIKATDVSQYEATRPVSGEYGLAAVPEHEPGLDDTQSSELQIHSLKDAFASTSEGPEKTPVSTRTRSSHLKRPKIGKHFQDSEFSSSQGEDENVAKTSPTASVNKIEYAARTSESSEEFLEEEPEQGVIDFEDESGDKDAQPALETQPRLQKQDGDKDSALEPVNGEVMDAALKPSLTTEDEDSTSEGLEEDLKVPPFNSSGEPGNPVPLVAESSKVPEATLAKTSPDTDSEMLIDQSPSDDKGHTEENLSPVSKKKTLLGSSDNVATVSNIEKSDGNFPNSVVPEFPEEPVSQNLSPNTTSSVEDQGEEGAPEAQEPSATQSSLIEVELEDAPFPQNAGQKSQSEEQSEASSEHLEQFTQSAEKAVDSSSEEIEVEVPVVDRRNLRRKAKGHKGPGKKKAKLT.

A disordered region spans residues 309–665; it reads AFASTSEGPE…GPGKKKAKLT (357 aa). Over residues 311–326 the composition is skewed to polar residues; that stretch reads ASTSEGPEKTPVSTRT. The segment covering 327–338 has biased composition (basic residues); sequence RSSHLKRPKIGK. Phosphoserine occurs at positions 348 and 377. Positions 376–397 are enriched in acidic residues; sequence SSEEFLEEEPEQGVIDFEDESG. A compositionally biased stretch (basic and acidic residues) spans 412-421; it reads QKQDGDKDSA. A compositionally biased stretch (acidic residues) spans 440–451; that stretch reads TEDEDSTSEGLE. Phosphoserine is present on residues serine 447 and serine 512. 2 stretches are compositionally biased toward polar residues: residues 521 to 533 and 553 to 566; these read LGSS…VSNI and VSQN…SSVE. Serine 610, serine 613, and serine 630 each carry phosphoserine. Residues 646 to 665 are compositionally biased toward basic residues; that stretch reads NLRRKAKGHKGPGKKKAKLT.

This sequence belongs to the FAM169 family.

It is found in the nucleus envelope. Its subcellular location is the nucleus inner membrane. The sequence is that of Soluble lamin-associated protein of 75 kDa (Fam169a) from Mus musculus (Mouse).